The chain runs to 272 residues: WIMGHMVNDLDLVDEYLDDGANSLELDVEFSKSGTALRTYHGVPCDCFRSCTRSEKFSKYLDYIRQLTTPGNSKFRSRLILLVLDLKLNPLSSSAAYNAGADVARNLLDNYWQRGESKARAYIVLSLETIAGAEFITGFKDIMKKEGFDEKYYDKIGWDFSGNEDLGKIRDVLESHGIREHIWQGDGITNCLPRDDNRLKQAISRRYSPTYVYADKVYTWSIDKESSIENALRLGVDGVMTNYPARVISVLGEREFSGKLRLATYDDNPWEK.

His5 is a catalytic residue. Residues Glu25 and Asp27 each contribute to the Mg(2+) site. His41 (nucleophile) is an active-site residue. 2 disulfides stabilise this stretch: Cys45–Cys51 and Cys47–Cys191. Asp85 serves as a coordination point for Mg(2+).

Belongs to the arthropod phospholipase D family. Class II subfamily. Class IIb sub-subfamily. The cofactor is Mg(2+). In terms of tissue distribution, expressed by the venom gland.

The protein resides in the secreted. The catalysed reaction is an N-(acyl)-sphingosylphosphocholine = an N-(acyl)-sphingosyl-1,3-cyclic phosphate + choline. It carries out the reaction N-hexanoyl-sphing-4-enine-1-phosphocholine = N-(hexanoyl)-sphing-4-enine-1,3-cyclic phosphate + choline. The enzyme catalyses an N-(acyl)-sphingosylphosphoethanolamine = an N-(acyl)-sphingosyl-1,3-cyclic phosphate + ethanolamine. It catalyses the reaction N-dodecanoyl-heptadecasphing-4-enine-1-phosphoethanolamine = N-dodecanoyl-heptadecasphing-4-enine-1,3-cyclic phosphate + ethanolamine. The catalysed reaction is a 1-acyl-sn-glycero-3-phosphoethanolamine = a 1-acyl-sn-glycero-2,3-cyclic phosphate + ethanolamine. It carries out the reaction 1-tetradecanoyl-sn-glycero-3-phosphoethanolamine = 1-tetradecanoyl-sn-glycero-2,3-cyclic phosphate + ethanolamine. Functionally, dermonecrotic toxins cleave the phosphodiester linkage between the phosphate and headgroup of certain phospholipids (sphingolipid and lysolipid substrates), forming an alcohol (often choline) and a cyclic phosphate. This toxin acts on lysophosphatidylethanolamine (LPE) and ceramide phosphoethanolamine (CPE) with high activity. This toxin acts on sphingomyelin (SM) with very low activity and is not active on lysophosphatidylserine (LPS), lysophosphatidylcholine (LPC) and lysophosphatidylglycerol (LPG). It acts by transphosphatidylation, releasing exclusively cyclic phosphate as second products. It is not surprising that spider toxins have affinity for ethanolamine-containing sphingolipids since they are common in insect prey. Induces dermonecrosis, hemolysis, increased vascular permeability, edema, inflammatory response, and platelet aggregation. In Sicarius terrosus (Cave spider), this protein is Dermonecrotic toxin StSicTox-betaIC1.